A 452-amino-acid chain; its full sequence is UPF0210 protein PTH_0987 (452 aa).

The protein belongs to the UPF0210 family. As to quaternary structure, homodimer.

The protein is UPF0210 protein PTH_0987 of Pelotomaculum thermopropionicum (strain DSM 13744 / JCM 10971 / SI).